The primary structure comprises 256 residues: MEAAADSPAETRSRVEKDSRRVEKDSRRPKKDSPAKTQSPAQDTSIMLRNNADTGKVLALPEHKKKRKGYLPAESVKILRRWMYKHRFRAYPSEAEKRMLSKKTNLSLSQISNWFINARRRILPDMLQRRGNDRIVGHKTGKDANATHLQSTDASVPAKSGPRGSDNVQSLPLRSSPKGQMSGEKIPEPGSAPSQKLTMIAQPKKKVKVSNITSSSSPEPVSTEEYADFSSFQLLVDAAVQRAAELELEKKQESNP.

Residues 1 to 45 (MEAAADSPAETRSRVEKDSRRVEKDSRRPKKDSPAKTQSPAQDTS) are disordered. Positions 9–34 (AETRSRVEKDSRRVEKDSRRPKKDSP) are enriched in basic and acidic residues. Residues 35–45 (AKTQSPAQDTS) show a composition bias toward polar residues. Residues 62-125 (EHKKKRKGYL…INARRRILPD (64 aa)) constitute a DNA-binding region (homeobox; TALE-type). Positions 136 to 224 (VGHKTGKDAN…SSSPEPVSTE (89 aa)) are disordered. Over residues 166-179 (DNVQSLPLRSSPKG) the composition is skewed to polar residues. The segment covering 209–224 (VSNITSSSSPEPVSTE) has biased composition (low complexity).

Belongs to the TALE/TGIF homeobox family.

It localises to the nucleus. May have a transcription role in testis. This chain is Homeobox protein TGIF2LX (TGIF2LX), found in Papio hamadryas (Hamadryas baboon).